Consider the following 536-residue polypeptide: CRISPR-associated DNA-binding protein Cas12m (536 aa).

Residues 1 to 59 (MPFGKKARHVKAYQFGADAPQEGMEAVLEQHRLRTDYYNALVEMELRQREERTALLANL) are recognition domain (REC1-N). Residues 60–105 (AAESGLESPNQVYERLKAAGEKGIRKHPEYVAARERQKALYGHPRL) are recognition domain (REC2). Residues 106–159 (LELQSRQREERNALRRSFGAKGLYSSNYLDVERAFDKARQSPELRFRRYSPHEG) form a recognition domain (REC1-C) region. Residues 160–257 (RLAVLYTEGL…RWTVSVVVEV (98 aa)) form a wedge domain (WED) region. A linker region spans residues 258–270 (EGPPVASPTGRGA). Residues 271 to 481 (VAVDLGWRRV…QRGKPVRKLN (211 aa)) are ruvC-I. The segment at 482 to 516 (PAHTTTDCHACGGALVGDPAKELRLYCPTCERFYD) is target nucleic-acid binding (TNB). Zn(2+)-binding residues include cysteine 489, cysteine 492, cysteine 508, and cysteine 511. The segment at 517–536 (QDENAARNLLRRAQEVQAQV) is ruvC-II. Aspartate 518 lines the Mg(2+) pocket.

Belongs to the CRISPR-associated DNA-binding protein Cas12m family. Mg(2+) is required as a cofactor. It depends on Zn(2+) as a cofactor.

Pre-crRNA processing is inhibited by EDTA. Its function is as follows. CRISPR (clustered regularly interspaced short palindromic repeat), is an adaptive immune system that provides protection against mobile genetic elements (viruses, transposable elements and conjugative plasmids). CRISPR clusters contain sequences complementary to antecedent mobile elements and target invading nucleic acids. CRISPR clusters are transcribed and processed into CRISPR RNA (crRNA). Recognizes a short motif in the CRISPR repeat sequences (the 5' PAM or protospacer adjacent motif, 5'-TT/CN-3' in this organism) to help distinguish self versus nonself, as targets within the bacterial CRISPR locus do not have PAMs. Cas12m-crRNA binds DNA in a PAM-dependent, crRNA-guided fashion. DNA-binding probably inhibits transcription, leading to gene silencing. No dsDNA, ssDNA or RNA nuclease activity is seen for the crRNA-Cas12m complex. Upon expression in E.coli as a CRISPR region preferentially binds to its associated crRNA. Is required to process pre-crRNA to mature crRNA without a tracrRNA; processing is Mg(2+)-dependent and does not require the predicted RuvC domain catalytic site. This Allomeiothermus silvanus (strain ATCC 700542 / DSM 9946 / NBRC 106475 / NCIMB 13440 / VI-R2) (Thermus silvanus) protein is CRISPR-associated DNA-binding protein Cas12m.